Consider the following 324-residue polypeptide: uncharacterized protein (324 aa).

This is an uncharacterized protein from Methanocaldococcus jannaschii (strain ATCC 43067 / DSM 2661 / JAL-1 / JCM 10045 / NBRC 100440) (Methanococcus jannaschii).